The primary structure comprises 318 residues: MSVPAEAGKRRDRRRHVLDLDDFSTQEIEEILETAVSMKEVLGRAIKQVPTLRGKTIVNMFFEESTRTRISFELAGKALSANVVNFTARGSSVEKGESLIDTVRTLQALGADMLVMRHSESGAPYLAAQYFHGSVINAGDGRHAHPTQALLDLFTVRQRLGRIEGLKVVIVGDILHSRVARSNLWGFTRMGASVTLCAPQTLIGPESFWKATWPDLTITSNLDECIKDADVIMTLRLQKERMEAGLLPSLREYSRFFAITAERVARAAPHCLVMHPGPMNEGVEIMPDVATSAQSVIEEQVANGVAVRMALLYRLSGE.

Positions 67 and 68 each coordinate carbamoyl phosphate. Residue lysine 95 coordinates L-aspartate. Carbamoyl phosphate-binding residues include arginine 117, histidine 145, and glutamine 148. L-aspartate contacts are provided by arginine 178 and arginine 236. Residues glycine 277 and proline 278 each coordinate carbamoyl phosphate.

This sequence belongs to the aspartate/ornithine carbamoyltransferase superfamily. ATCase family. As to quaternary structure, heterododecamer (2C3:3R2) of six catalytic PyrB chains organized as two trimers (C3), and six regulatory PyrI chains organized as three dimers (R2).

It catalyses the reaction carbamoyl phosphate + L-aspartate = N-carbamoyl-L-aspartate + phosphate + H(+). It participates in pyrimidine metabolism; UMP biosynthesis via de novo pathway; (S)-dihydroorotate from bicarbonate: step 2/3. In terms of biological role, catalyzes the condensation of carbamoyl phosphate and aspartate to form carbamoyl aspartate and inorganic phosphate, the committed step in the de novo pyrimidine nucleotide biosynthesis pathway. The polypeptide is Aspartate carbamoyltransferase catalytic subunit (Roseiflexus sp. (strain RS-1)).